We begin with the raw amino-acid sequence, 190 residues long: Selenoprotein S (190 aa).

A helical membrane pass occupies residues 28 to 48 (SLLATYGWYIVFCCILLYVVF). The VCP/p97-interacting motif (VIM) stretch occupies residues 78–90 (RQEALAAARLKMQ). Residues 115–138 (KIERWDSVQEGRSYRGDARKRQEE) are compositionally biased toward basic and acidic residues. Residues 115–190 (KIERWDSVQE…RRGPSSGGUG (76 aa)) are disordered. S140 bears the Phosphoserine mark. A compositionally biased stretch (gly residues) spans 160–174 (RGGGYNPLSGEGGGA). U189 is a non-standard amino acid (selenocysteine).

This sequence belongs to the selenoprotein S family. In terms of assembly, interacts with DERL1 and (via VIM motif) with VCP, suggesting that it forms a membrane complex with DERL1 that serves as a receptor for VCP. Also interacts with DERL2, DERL3 and SELENOK. The SELENOK-SELENOS complex interacts with VCP. Truncated SELENOS proteins produced by failed UGA/Sec decoding are ubiquitinated by the CRL2(KLHDC2) and CRL2(KLHDC3) complexes, which recognizes the glycine (Gly) at the C-terminus of truncated SELENOS proteins. Truncated SELENOS proteins produced by failed UGA/Sec decoding are also ubiquitinated by the CRL5(KLHDC1) complex. In terms of tissue distribution, ubiquitously expressed. Highest expression in liver and lung, with lower levels detected in spleen, kidney, brain, lymph nodes, small intestine, stomach and heart. Very low expression detected in longissimus dorsi.

It is found in the cytoplasm. It localises to the endoplasmic reticulum membrane. Its function is as follows. Involved in the degradation process of misfolded endoplasmic reticulum (ER) luminal proteins. Participates in the transfer of misfolded proteins from the ER to the cytosol, where they are destroyed by the proteasome in a ubiquitin-dependent manner. Probably acts by serving as a linker between DERL1, which mediates the retrotranslocation of misfolded proteins into the cytosol, and the ATPase complex VCP, which mediates the translocation and ubiquitination. This Sus scrofa (Pig) protein is Selenoprotein S.